We begin with the raw amino-acid sequence, 37 residues long: MKVRVSVKPICEKCKVIKRKGVLRIICDNLKHKQRQK.

It belongs to the bacterial ribosomal protein bL36 family.

The polypeptide is Large ribosomal subunit protein bL36 (Borreliella burgdorferi (strain ATCC 35210 / DSM 4680 / CIP 102532 / B31) (Borrelia burgdorferi)).